We begin with the raw amino-acid sequence, 544 residues long: MFS-type transporter prx5 (544 aa).

Positions 1–28 (MAVDTEKDSVQAGSPMETPGSPVDETTE) are disordered. 13 helical membrane passes run 36–56 (WIVSMILSCGYGLSFWPIPVV), 90–110 (LDHLCFLDLVCFIGHIVVASA), 116–136 (VIAGLVVSGFGGANCQMAAFA), 148–168 (IGVVIADLTVYIAVIIAPVTA), 178–198 (AWNFWGVAIFQGLSFFGLLFL), 221–241 (GAFLFIGGAVPFLMGIVWAGV), 249–269 (VVAPLVVGAAVLVCFALWESF), 290–310 (FTAPVIALGVVNMFYYSSSIL), 330–350 (VILSLPQGFAIFFGAMLLTCF), 361–381 (LTGSVFVMVVFGSLLGIVTPT), 387–407 (IAFIFLSQAGFGWALYLSIAI), 418–438 (GVSGGISGCIRFAAGAVATSI), and 505–525 (AIFVVAMVSMAFGILGLAACL).

This sequence belongs to the major facilitator superfamily.

Its subcellular location is the cell membrane. Functionally, MFS-type transporter; part of the gene cluster that mediates the biosynthesis of PR-toxin, a bicyclic sesquiterpene belonging to the eremophilane class and acting as a mycotoxin. The polypeptide is MFS-type transporter prx5 (Penicillium rubens (strain ATCC 28089 / DSM 1075 / NRRL 1951 / Wisconsin 54-1255) (Penicillium chrysogenum)).